Consider the following 310-residue polypeptide: Ribosomal RNA small subunit methyltransferase H (310 aa).

S-adenosyl-L-methionine contacts are provided by residues 32–34 (AGH), Asp-51, Phe-78, Asp-99, and Gln-106.

It belongs to the methyltransferase superfamily. RsmH family.

It localises to the cytoplasm. It carries out the reaction cytidine(1402) in 16S rRNA + S-adenosyl-L-methionine = N(4)-methylcytidine(1402) in 16S rRNA + S-adenosyl-L-homocysteine + H(+). Specifically methylates the N4 position of cytidine in position 1402 (C1402) of 16S rRNA. In Macrococcus caseolyticus (strain JCSC5402) (Macrococcoides caseolyticum), this protein is Ribosomal RNA small subunit methyltransferase H.